Consider the following 147-residue polypeptide: Ribonuclease P protein component 2 (147 aa).

This sequence belongs to the eukaryotic/archaeal RNase P protein component 2 family. In terms of assembly, consists of a catalytic RNA component and at least 4-5 protein subunits.

It localises to the cytoplasm. The enzyme catalyses Endonucleolytic cleavage of RNA, removing 5'-extranucleotides from tRNA precursor.. Part of ribonuclease P, a protein complex that generates mature tRNA molecules by cleaving their 5'-ends. This Methanocorpusculum labreanum (strain ATCC 43576 / DSM 4855 / Z) protein is Ribonuclease P protein component 2.